We begin with the raw amino-acid sequence, 82 residues long: Exodeoxyribonuclease 7 small subunit (82 aa).

Belongs to the XseB family. In terms of assembly, heterooligomer composed of large and small subunits.

The protein resides in the cytoplasm. It catalyses the reaction Exonucleolytic cleavage in either 5'- to 3'- or 3'- to 5'-direction to yield nucleoside 5'-phosphates.. Its function is as follows. Bidirectionally degrades single-stranded DNA into large acid-insoluble oligonucleotides, which are then degraded further into small acid-soluble oligonucleotides. The protein is Exodeoxyribonuclease 7 small subunit of Pectobacterium atrosepticum (strain SCRI 1043 / ATCC BAA-672) (Erwinia carotovora subsp. atroseptica).